We begin with the raw amino-acid sequence, 122 residues long: Large ribosomal subunit protein bL12 (122 aa).

The protein belongs to the bacterial ribosomal protein bL12 family. In terms of assembly, homodimer. Part of the ribosomal stalk of the 50S ribosomal subunit. Forms a multimeric L10(L12)X complex, where L10 forms an elongated spine to which 2 to 4 L12 dimers bind in a sequential fashion. Binds GTP-bound translation factors.

Functionally, forms part of the ribosomal stalk which helps the ribosome interact with GTP-bound translation factors. Is thus essential for accurate translation. In Acinetobacter baumannii (strain AB0057), this protein is Large ribosomal subunit protein bL12.